The chain runs to 405 residues: Growth/differentiation factor 11 (405 aa).

The N-terminal stretch at 1-24 is a signal peptide; the sequence is MVLAAPLLLGFLLLALELRPRGEA. A propeptide spanning residues 25–296 is cleaved from the precursor; sequence AEGPAAAAAA…VLENTKRSRR (272 aa). A glycan (N-linked (GlcNAc...) asparagine) is linked at Asn-92. 4 cysteine pairs are disulfide-bonded: Cys-302–Cys-312, Cys-311–Cys-370, Cys-339–Cys-402, and Cys-343–Cys-404.

It belongs to the TGF-beta family. Homodimer; disulfide-linked. Interacts directly with ACVR2B. Interacts directly with ACVR2A. Interacts with ACVR1B, TGFBR1 and ACVR1C in an ACVR2B-dependent manner. Interacts with FST isoform 2/FS288. In terms of processing, synthesized as large precursor molecule that undergoes proteolytic cleavage by furin-like proteases. This produces an inactive form consisting of the mature C-terminal portion non-covalently bound to its cleaved N-terminal propeptide. Activation of the mature form requires additional cleavage of the propeptide by a tolloid-like metalloproteinase.

It localises to the secreted. Secreted signal that acts globally to regulate anterior/posterior axial patterning during development. May play critical roles in patterning both mesodermal and neural tissues. It is required for proper vertebral patterning and orofacial development. Signals through activin receptors type-2, ACVR2A and ACVR2B, and activin receptors type-1, ACVR1B, ACVR1C and TGFBR1 leading to the phosphorylation of SMAD2 and SMAD3. This is Growth/differentiation factor 11 (Gdf11) from Rattus norvegicus (Rat).